A 670-amino-acid chain; its full sequence is Solute carrier organic anion transporter family member 1A6 (670 aa).

The Cytoplasmic segment spans residues 1 to 20; it reads MGEPGKRVGIHRVRCFAKIK. Residues 21–40 form a helical membrane-spanning segment; sequence VFLLALIWAYISKILSGVYM. Over 41–59 the chain is Extracellular; sequence STMLTQLERQFNISTSIVG. N-linked (GlcNAc...) asparagine glycosylation occurs at N52. The helical transmembrane segment at 60-80 threads the bilayer; it reads LINGSFEMGNLLVIVFVSYFG. Residues 81-86 are Cytoplasmic-facing; sequence TKLHRP. The chain crosses the membrane as a helical span at residues 87–111; sequence IMIGVGCAVMGLGCFIISLPHFLMG. The Extracellular portion of the chain corresponds to 112–155; it reads RYEYETTISPTSNLSSNSFLCVENRSQTLKPTQDPAECVKEIKS. N-linked (GlcNAc...) asparagine glycosylation is found at N124 and N135. Residues 156-184 form a helical membrane-spanning segment; that stretch reads LMWIYVLVGNIIRGIGETPIMPLGISYIE. Over 185-203 the chain is Cytoplasmic; it reads DFAKSENSPLYIGILEVGK. A helical transmembrane segment spans residues 204–224; it reads MIGPILGYLMGPFCANIYVDT. Topologically, residues 225–242 are extracellular; that stretch reads GSVNTDDLTITPTDTRWV. A helical membrane pass occupies residues 243-267; the sequence is GAWWIGFLVCAGVNVLTSIPFFFFP. The Cytoplasmic segment spans residues 268-311; the sequence is KTLPKEGLQDNGDGTENAKEEKHRDKAKEENQGIIKEFFLMMKN. Residues 312–333 traverse the membrane as a helical segment; that stretch reads LFCNPIYMLCVLTSVLQVNGVA. Topologically, residues 334–353 are extracellular; the sequence is NIVIYKPKYLEHHFGISTAK. The chain crosses the membrane as a helical span at residues 354–377; sequence AVFLIGLYTTPSVSAGYLISGFIM. The Cytoplasmic segment spans residues 378–381; it reads KKLK. A helical transmembrane segment spans residues 382 to 405; that stretch reads ITLKKAAIIALCLFMSECLLSLCN. Topologically, residues 406 to 513 are extracellular; sequence FMLTCDTTPI…PDCANKLQYF (108 aa). A Kazal-like domain is found at 433–488; it reads NKFLSDCNTRCNCLTKTWDPVCGNNGLAYMSPCLAGCEKSVGTGANMVFQNCSCIR. 3 disulfides stabilise this stretch: C439–C469, C445–C465, and C454–C486. N483 and N492 each carry an N-linked (GlcNAc...) asparagine glycan. The chain crosses the membrane as a helical span at residues 514-536; that stretch reads LIITVFCCFFYSLATIPGYMVFL. The Cytoplasmic portion of the chain corresponds to 537–545; that stretch reads RCMKSEEKS. The chain crosses the membrane as a helical span at residues 546-571; the sequence is LGIGLQAFFMRLFAGIPAPIYFGALI. The Extracellular portion of the chain corresponds to 572–605; it reads DRTCLHWGTLKCGEPGACRTYEVSSFRRLYLGLP. A helical transmembrane segment spans residues 606-623; sequence AALRGSIILPSFFILRLI. At 624–670 the chain is on the cytoplasmic side; sequence RKLQIPGDTDSSEIELAETKPTEKESECTDMHKSSKVENDGELKTKL. T632 is subject to Phosphothreonine. The interval 633–670 is disordered; sequence DSSEIELAETKPTEKESECTDMHKSSKVENDGELKTKL. S634 and S635 each carry phosphoserine. Positions 640–670 are enriched in basic and acidic residues; it reads AETKPTEKESECTDMHKSSKVENDGELKTKL.

This sequence belongs to the organo anion transporter (TC 2.A.60) family. As to expression, kidney specific.

It localises to the cell membrane. In terms of biological role, may mediate the Na(+)-independent transport of organic anions. The protein is Solute carrier organic anion transporter family member 1A6 (Slco1a6) of Mus musculus (Mouse).